The following is a 211-amino-acid chain: Receptor expression-enhancing protein 6 (211 aa).

2 consecutive transmembrane segments (helical) span residues 44–64 (LSLY…IGFV) and 89–109 (WVVY…LSWF). The tract at residues 190–211 (AGPSTPLEADLKPSQTPQPKDK) is disordered. The segment covering 202 to 211 (PSQTPQPKDK) has biased composition (polar residues).

This sequence belongs to the DP1 family. In terms of assembly, interacts with STX3. Interacts with clathrin. Expressed in circumvallate papillae and testis. Expressed in the retina. Isoform 1 is predominantly present in mature optic cups. Isoform 1 expression is confined to the cell body and inner segment of developing rod photoreceptor cells.

The protein localises to the endoplasmic reticulum membrane. The protein resides in the cytoplasmic vesicle. Its subcellular location is the clathrin-coated vesicle membrane. Its function is as follows. Required for correct function and survival of retinal photoreceptors. Required for retinal development. In rod photoreceptors, facilitates stability and/or trafficking of guanylate cyclases and is required to maintain endoplasmic reticulum and mitochondrial homeostasis. May play a role in clathrin-coated intracellular vesicle trafficking of proteins from the endoplasmic reticulum to the retinal rod plasma membrane. This chain is Receptor expression-enhancing protein 6 (REEP6), found in Homo sapiens (Human).